We begin with the raw amino-acid sequence, 570 residues long: MARISRAAYAQMYGPTVGDKVRLADTELFIEVEKDLTIHGEEVKFGGGKVIRDGMGQSQVSRAQGAVDTVITNALVVDAGAGIFKADIGLKDGRIAAIGKAGNPDTQDGVTIIIGPGTEIIAGEGKILTAGGFDAHIHFICPQQIEEALMSGITTMLGGGTGPAHGTLATTCTPGPWHMARMIQSFDAFPMNIGLSGKGNASLPAALEEMVLGGACSLKLHEDWGTTPAAIDCCLSVADDYDVQVMIHTDTLNESGFVENTVAAIKGRTIHAFHTEGAGGGHAPDIIKVCGLPNVIPSSTNPTRPYTVNTLAEHLDMLMVCHHLSPSIPEDIAFAESRIRKETIAAEDILHDIGAFSIISSDSQAMGRVGEVAIRTWQTADKMKRQRGALPQETGDNDNFRVRRYIAKYTINPAIAHGLSKDIGSIAVGKRADLVLWNPAFFGVKPDMVLVGGMIAAAPMGDPNASIPTPQPMHYRPMFGAYGKARTNSSVTFVSKAALESGLHGRLGVEKQFVAVENTRGGIGKHSMVLNDATPHVEVDPETYEVRADGELLTCEPATVLPMAQRYFLF.

Positions 131-570 constitute a Urease domain; that stretch reads GGFDAHIHFI…LPMAQRYFLF (440 aa). Residues histidine 136, histidine 138, and lysine 219 each coordinate Ni(2+). Residue lysine 219 is modified to N6-carboxylysine. Histidine 221 serves as a coordination point for substrate. Ni(2+) is bound by residues histidine 248 and histidine 274. Histidine 322 functions as the Proton donor in the catalytic mechanism. Aspartate 362 is a Ni(2+) binding site.

It belongs to the metallo-dependent hydrolases superfamily. Urease alpha subunit family. As to quaternary structure, heterotrimer of UreA (gamma), UreB (beta) and UreC (alpha) subunits. Three heterotrimers associate to form the active enzyme. Ni cation serves as cofactor. Post-translationally, carboxylation allows a single lysine to coordinate two nickel ions.

It is found in the cytoplasm. The enzyme catalyses urea + 2 H2O + H(+) = hydrogencarbonate + 2 NH4(+). It functions in the pathway nitrogen metabolism; urea degradation; CO(2) and NH(3) from urea (urease route): step 1/1. The protein is Urease subunit alpha of Mesorhizobium japonicum (strain LMG 29417 / CECT 9101 / MAFF 303099) (Mesorhizobium loti (strain MAFF 303099)).